The primary structure comprises 184 residues: MSTNVAKARVKSVLNESRQIERAAVLIRMGARMQVLESETTLSYERLIRLYKEIAGKSPSKGQLPFSTDWFLTWQENIHSSLFLNIYEYLSKGLDLDAVELLIRAYRLYDEQVTTTAIAPLLSFTRAWRLVKFVDAGMLTRTRCARCGGQFVTELYESRHFICGLCHPPARAGKSRVAGALMLH.

Zn(2+)-binding residues include Cys144, Cys147, Cys163, and Cys166.

This sequence belongs to the FlhC family. As to quaternary structure, heterohexamer composed of two FlhC and four FlhD subunits. Each FlhC binds a FlhD dimer, forming a heterotrimer, and a hexamer assembles by dimerization of two heterotrimers. The cofactor is Zn(2+).

The protein resides in the cytoplasm. In terms of biological role, functions in complex with FlhD as a master transcriptional regulator that regulates transcription of several flagellar and non-flagellar operons by binding to their promoter region. Activates expression of class 2 flagellar genes, including fliA, which is a flagellum-specific sigma factor that turns on the class 3 genes. Also regulates genes whose products function in a variety of physiological pathways. The sequence is that of Flagellar transcriptional regulator FlhC from Verminephrobacter eiseniae (strain EF01-2).